The chain runs to 130 residues: Small ribosomal subunit protein uS8 (130 aa).

This sequence belongs to the universal ribosomal protein uS8 family. In terms of assembly, part of the 30S ribosomal subunit. Contacts proteins S5 and S12.

Functionally, one of the primary rRNA binding proteins, it binds directly to 16S rRNA central domain where it helps coordinate assembly of the platform of the 30S subunit. This Nitrosococcus oceani (strain ATCC 19707 / BCRC 17464 / JCM 30415 / NCIMB 11848 / C-107) protein is Small ribosomal subunit protein uS8.